A 180-amino-acid chain; its full sequence is Shikimate kinase (180 aa).

ATP is bound at residue 14-19 (GAGKST). Serine 18 serves as a coordination point for Mg(2+). Residues aspartate 36, arginine 60, and glycine 82 each coordinate substrate. Residue arginine 120 participates in ATP binding. Arginine 139 is a binding site for substrate.

This sequence belongs to the shikimate kinase family. Monomer. Mg(2+) serves as cofactor.

Its subcellular location is the cytoplasm. The enzyme catalyses shikimate + ATP = 3-phosphoshikimate + ADP + H(+). It participates in metabolic intermediate biosynthesis; chorismate biosynthesis; chorismate from D-erythrose 4-phosphate and phosphoenolpyruvate: step 5/7. Its function is as follows. Catalyzes the specific phosphorylation of the 3-hydroxyl group of shikimic acid using ATP as a cosubstrate. The polypeptide is Shikimate kinase (Chromohalobacter salexigens (strain ATCC BAA-138 / DSM 3043 / CIP 106854 / NCIMB 13768 / 1H11)).